Here is a 359-residue protein sequence, read N- to C-terminus: 3-isopropylmalate dehydrogenase (359 aa).

NAD(+) is bound at residue 74–85; that stretch reads GPKWGTGSVRPE. Positions 92, 102, 131, and 220 each coordinate substrate. Residues aspartate 220, aspartate 245, and aspartate 249 each coordinate Mg(2+). 284-295 provides a ligand contact to NAD(+); it reads GSAPDLPANKVN.

This sequence belongs to the isocitrate and isopropylmalate dehydrogenases family. In terms of assembly, homodimer. Mg(2+) is required as a cofactor. The cofactor is Mn(2+).

It is found in the cytoplasm. It catalyses the reaction (2R,3S)-3-isopropylmalate + NAD(+) = 4-methyl-2-oxopentanoate + CO2 + NADH. It functions in the pathway amino-acid biosynthesis; L-leucine biosynthesis; L-leucine from 3-methyl-2-oxobutanoate: step 3/4. In terms of biological role, catalyzes the oxidation of 3-carboxy-2-hydroxy-4-methylpentanoate (3-isopropylmalate) to 3-carboxy-4-methyl-2-oxopentanoate. The product decarboxylates to 4-methyl-2 oxopentanoate. This chain is 3-isopropylmalate dehydrogenase (LEU2), found in Kluyveromyces marxianus (Yeast).